Consider the following 158-residue polypeptide: Dysbindin domain-containing protein 1 (158 aa).

The segment at 1–38 is disordered; sequence MEPSEGASPGGLVKEVDMPQAALSAPVPVTGTSGQSPM. Phosphoserine occurs at positions 95 and 119. The segment at 96–158 is disordered; sequence DDENVASDSH…ILTVERPKED (63 aa). Basic and acidic residues predominate over residues 125 to 141; that stretch reads TRAEQNREKQPFGDPER.

The protein belongs to the dysbindin family.

This chain is Dysbindin domain-containing protein 1 (DBNDD1), found in Bos taurus (Bovine).